The chain runs to 37 residues: Calcitonin gene-related peptide 1 (37 aa).

Residues C2 and C7 are joined by a disulfide bond. F37 is subject to Phenylalanine amide.

This sequence belongs to the calcitonin family.

It is found in the secreted. Functionally, CGRP1/CALCA is a peptide hormone that induces vasodilation mediated by the CALCRL-RAMP1 receptor complex. Dilates a variety of vessels including the coronary, cerebral and systemic vasculature. Its abundance in the CNS also points toward a neurotransmitter or neuromodulator role. It also elevates platelet cAMP. CGRP1 can also bind and activate CALCR-RAMP1 (AMYR1) receptor complex. The protein is Calcitonin gene-related peptide 1 (CALCA) of Sus scrofa (Pig).